The sequence spans 101 residues: uncharacterized protein (101 aa).

The chain crosses the membrane as a helical span at residues 68 to 90; the sequence is LAFAFCGRANTFISCFISFASLI.

It localises to the membrane. This is an uncharacterized protein from Saccharomyces cerevisiae (strain ATCC 204508 / S288c) (Baker's yeast).